The chain runs to 253 residues: Fatty acid elongase 5 (253 aa).

A run of 7 helical transmembrane segments spans residues 24–44 (IFVS…LVII), 60–80 (IMMI…ISLA), 100–120 (FWIF…VLMI), 127–147 (QLSF…GLLL), 150–170 (GIGN…HFLM), 188–208 (ILTK…SLAP), and 214–234 (FALQ…ILFL). Positions 132–136 (HIYHH) match the HxxHH motif motif. Residue H135 is the Nucleophile of the active site.

It belongs to the ELO family.

Its subcellular location is the membrane. The catalysed reaction is an acyl-CoA + malonyl-CoA + H(+) = a 3-oxoacyl-CoA + CO2 + CoA. The protein operates within lipid metabolism; polyunsaturated fatty acid biosynthesis. Functionally, involved in the synthesis of fatty acids. Elongates C20 polyunsaturated fatty acids (PUFAs) with a preference for n-6 PUFAs. This is Fatty acid elongase 5 from Trypanosoma cruzi (strain CL Brener).